Consider the following 193-residue polypeptide: V-type ATP synthase subunit E (193 aa).

It belongs to the V-ATPase E subunit family.

Functionally, produces ATP from ADP in the presence of a proton gradient across the membrane. This chain is V-type ATP synthase subunit E, found in Anaeromyxobacter sp. (strain Fw109-5).